The following is a 299-amino-acid chain: NAD kinase (299 aa).

Residue Asp-75 is the Proton acceptor of the active site. Residues Asp-75–Gly-76, Asn-149–Asp-150, Arg-177, Asp-179, Thr-190–Ser-195, Ala-214, and Gln-248 each bind NAD(+).

The protein belongs to the NAD kinase family. It depends on a divalent metal cation as a cofactor.

The protein resides in the cytoplasm. The enzyme catalyses NAD(+) + ATP = ADP + NADP(+) + H(+). Functionally, involved in the regulation of the intracellular balance of NAD and NADP, and is a key enzyme in the biosynthesis of NADP. Catalyzes specifically the phosphorylation on 2'-hydroxyl of the adenosine moiety of NAD to yield NADP. The chain is NAD kinase from Burkholderia thailandensis (strain ATCC 700388 / DSM 13276 / CCUG 48851 / CIP 106301 / E264).